A 530-amino-acid polypeptide reads, in one-letter code: T-complex protein 1 subunit zeta (530 aa).

Glycine 38 provides a ligand contact to ADP. Position 38 (glycine 38) interacts with ATP. Aspartate 89 is a binding site for Mg(2+). Residues glycine 90, threonine 91, threonine 92, serine 93, threonine 157, lysine 158, and alanine 410 each contribute to the ADP site. Glycine 90, threonine 91, and threonine 92 together coordinate ATP. Residues alanine 410, glycine 411, aspartate 495, and lysine 500 each contribute to the ATP site. Residue aspartate 495 coordinates ADP.

Component of the chaperonin-containing T-complex (TRiC), a hexadecamer composed of two identical back-to-back stacked rings enclosing a protein folding chamber. Each ring is made up of eight different subunits: TCP1/CCT1, CCT2, CCT3, CCT4, CCT5, CCT6A/CCT6, CCT7, CCT8. Interacts with PACRG.

Its subcellular location is the cytoplasm. It catalyses the reaction ATP + H2O = ADP + phosphate + H(+). Its function is as follows. Component of the chaperonin-containing T-complex (TRiC), a molecular chaperone complex that assists the folding of actin, tubulin and other proteins upon ATP hydrolysis. The polypeptide is T-complex protein 1 subunit zeta (Gallus gallus (Chicken)).